A 289-amino-acid polypeptide reads, in one-letter code: ATP synthase gamma chain (289 aa).

Belongs to the ATPase gamma chain family. As to quaternary structure, F-type ATPases have 2 components, CF(1) - the catalytic core - and CF(0) - the membrane proton channel. CF(1) has five subunits: alpha(3), beta(3), gamma(1), delta(1), epsilon(1). CF(0) has three main subunits: a, b and c.

The protein resides in the cell membrane. Produces ATP from ADP in the presence of a proton gradient across the membrane. The gamma chain is believed to be important in regulating ATPase activity and the flow of protons through the CF(0) complex. This is ATP synthase gamma chain from Lawsonia intracellularis (strain PHE/MN1-00).